We begin with the raw amino-acid sequence, 465 residues long: DEAD-box ATP-dependent RNA helicase 55 (465 aa).

Residues 17-45 carry the Q motif motif; that stretch reads FSELKPPLSEDIIEALDRSGFEVCTPVQA. The Helicase ATP-binding domain occupies 48 to 219; the sequence is IPFLCSHKDV…KAGLRNPYLK (172 aa). 61-68 is an ATP binding site; sequence AATGSGKT. The DEAD box signature appears at 167-170; the sequence is DEAD. Residues 228–422 enclose the Helicase C-terminal domain; it reads QLVHLLIENK…KDKLQQEKRG (195 aa). The disordered stretch occupies residues 413-465; it reads KDKLQQEKRGKRKKSSKEAVDDSNKASRKRKLTGRQRQTIQTAQDEEEMNLRL. The segment covering 428 to 437 has biased composition (basic and acidic residues); that stretch reads SKEAVDDSNK. Residues 456–465 show a composition bias toward acidic residues; that stretch reads QDEEEMNLRL.

This sequence belongs to the DEAD box helicase family. DDX55/SPB4 subfamily.

It catalyses the reaction ATP + H2O = ADP + phosphate + H(+). This is DEAD-box ATP-dependent RNA helicase 55 (RH55) from Arabidopsis thaliana (Mouse-ear cress).